The sequence spans 265 residues: MESNLQGTFLLNNTPLAQFPEMKAPVCQYSVQNSFYKLSPPGLGPQLAAGTPHGITDILSRPVAAPNNSLLSGYPHVAGFGGLSSQGVYYSPQVGNFSKAGNEYPTRTRNCWADTGQDWRGGRQCSNTPDPLSDSIHKKKHTRPTFTGHQIFALEKTFEQTKYLAGPERARLAYSLGMTESQVKVWFQNRRTKWRKKSALEPSSSTPRAPGGAGAGAGGDRAPSENEDDEYNKPLDPDSDDEKIRLLLRKHRAAFSVLSLGAHSV.

A DNA-binding region (homeobox) is located at residues 139 to 198 (KKHTRPTFTGHQIFALEKTFEQTKYLAGPERARLAYSLGMTESQVKVWFQNRRTKWRKKS). Residues 196 to 240 (KKSALEPSSSTPRAPGGAGAGAGGDRAPSENEDDEYNKPLDPDSD) form a disordered region.

It is found in the nucleus. In terms of biological role, putative transcription factor, which may be involved in patterning of central nervous system and pancreas. The protein is Homeobox protein Nkx-6.3 (NKX6-3) of Homo sapiens (Human).